The primary structure comprises 89 residues: Small ribosomal subunit protein uS15 (89 aa).

The protein belongs to the universal ribosomal protein uS15 family. In terms of assembly, part of the 30S ribosomal subunit. Forms a bridge to the 50S subunit in the 70S ribosome, contacting the 23S rRNA.

One of the primary rRNA binding proteins, it binds directly to 16S rRNA where it helps nucleate assembly of the platform of the 30S subunit by binding and bridging several RNA helices of the 16S rRNA. Functionally, forms an intersubunit bridge (bridge B4) with the 23S rRNA of the 50S subunit in the ribosome. The chain is Small ribosomal subunit protein uS15 from Thermomicrobium roseum (strain ATCC 27502 / DSM 5159 / P-2).